A 100-amino-acid chain; its full sequence is Urease subunit gamma (100 aa).

Belongs to the urease gamma subunit family. As to quaternary structure, heterotrimer of UreA (gamma), UreB (beta) and UreC (alpha) subunits. Three heterotrimers associate to form the active enzyme.

Its subcellular location is the cytoplasm. The enzyme catalyses urea + 2 H2O + H(+) = hydrogencarbonate + 2 NH4(+). The protein operates within nitrogen metabolism; urea degradation; CO(2) and NH(3) from urea (urease route): step 1/1. The polypeptide is Urease subunit gamma (Rhodococcus opacus (strain B4)).